Consider the following 423-residue polypeptide: Transcription factor AP-2-epsilon (423 aa).

The disordered stretch occupies residues 1 to 108; the sequence is MLVHSYSSME…EDAGLLSQPH (108 aa). Residues 14 to 27 show a composition bias toward low complexity; it reads GLSSSSPGGRLSQL. The PPxY motif motif lies at 50–55; the sequence is YFPPPY. Over residues 57 to 70 the composition is skewed to low complexity; the sequence is QSSLSYSQSQDGGY. Positions 79-93 are enriched in polar residues; sequence SLNSLHQHQQAAWHS. An H-S-H (helix-span-helix), dimerization region spans residues 276–405; it reads RRKAANVTLL…YLLEALKLLD (130 aa).

The protein belongs to the AP-2 family. Binds DNA as a dimer. Can form homodimers or heterodimers with other AP-2 family members.

Its subcellular location is the nucleus. Its function is as follows. Sequence-specific DNA-binding protein that interacts with inducible viral and cellular enhancer elements to regulate transcription of selected genes. AP-2 factors bind to the consensus sequence 5'-GCCNNNGGC-3' and activate genes involved in a large spectrum of important biological functions. This chain is Transcription factor AP-2-epsilon, found in Danio rerio (Zebrafish).